A 206-amino-acid polypeptide reads, in one-letter code: MKRTKTSKAWMKEHVNDFFVRQAKKEGYRSRAAYKLMEIAERDHLFKPGMTVVDLGAAPGGWSQVAAEKLKGKGRAVALDILEMAPISGVTFIQGDFREASVLAELKEQLKDLPVDLVICDMSPNITGIRVIDQTRGMHLAELALEFCTEQLNSGGNFLVKVFQGSGFDEFFRAMRATFHRVVTRKPLASRGRSSEIYLLGLGKRD.

S-adenosyl-L-methionine is bound by residues Gly60, Trp62, Asp80, Asp96, and Asp121. Catalysis depends on Lys161, which acts as the Proton acceptor.

It belongs to the class I-like SAM-binding methyltransferase superfamily. RNA methyltransferase RlmE family.

Its subcellular location is the cytoplasm. The enzyme catalyses uridine(2552) in 23S rRNA + S-adenosyl-L-methionine = 2'-O-methyluridine(2552) in 23S rRNA + S-adenosyl-L-homocysteine + H(+). Its function is as follows. Specifically methylates the uridine in position 2552 of 23S rRNA at the 2'-O position of the ribose in the fully assembled 50S ribosomal subunit. This chain is Ribosomal RNA large subunit methyltransferase E, found in Nitrosospira multiformis (strain ATCC 25196 / NCIMB 11849 / C 71).